We begin with the raw amino-acid sequence, 266 residues long: 3-methyl-2-oxobutanoate hydroxymethyltransferase (266 aa).

2 residues coordinate Mg(2+): D45 and D84. 3-methyl-2-oxobutanoate contacts are provided by residues 45–46 (DS), D84, and K112. Residue E114 coordinates Mg(2+). The active-site Proton acceptor is E181.

It belongs to the PanB family. In terms of assembly, homodecamer; pentamer of dimers. Mg(2+) is required as a cofactor.

Its subcellular location is the cytoplasm. It carries out the reaction 3-methyl-2-oxobutanoate + (6R)-5,10-methylene-5,6,7,8-tetrahydrofolate + H2O = 2-dehydropantoate + (6S)-5,6,7,8-tetrahydrofolate. The protein operates within cofactor biosynthesis; (R)-pantothenate biosynthesis; (R)-pantoate from 3-methyl-2-oxobutanoate: step 1/2. In terms of biological role, catalyzes the reversible reaction in which hydroxymethyl group from 5,10-methylenetetrahydrofolate is transferred onto alpha-ketoisovalerate to form ketopantoate. This is 3-methyl-2-oxobutanoate hydroxymethyltransferase from Pseudomonas syringae pv. syringae (strain B728a).